The chain runs to 250 residues: Intermembrane phospholipid transport system lipoprotein MlaA (250 aa).

Residues 1–18 form the signal peptide; it reads MKTKTILTALLSAIALTG. A lipid anchor (N-palmitoyl cysteine) is attached at Cys-19. Cys-19 is lipidated: S-diacylglycerol cysteine.

The protein belongs to the MlaA family.

It is found in the cell outer membrane. Functionally, involved in a phospholipid transport pathway that maintains lipid asymmetry in the outer membrane by retrograde trafficking of phospholipids from the outer membrane to the inner membrane. The sequence is that of Intermembrane phospholipid transport system lipoprotein MlaA from Haemophilus influenzae (strain ATCC 51907 / DSM 11121 / KW20 / Rd).